The following is a 764-amino-acid chain: Thyrotropin receptor (764 aa).

The signal sequence occupies residues 1–20 (MRPPPLLHLALLLALPRSLG). Residues 21-413 (GKGCPSPPCE…EFNPCEDIMG (393 aa)) lie on the Extracellular side of the membrane. Cys-31 and Cys-41 form a disulfide bridge. 2 N-linked (GlcNAc...) asparagine glycosylation sites follow: Asn-77 and Asn-99. LRR repeat units lie at residues 125-149 (LPLL…KVYS), 150-174 (TDVF…AFQG), 176-199 (CNET…AFNG), 201-223 (KLDA…AFGG), 225-248 (YSGP…GLEH), and 250-271 (KELI…SFLH). N-linked (GlcNAc...) asparagine glycans are attached at residues Asn-177 and Asn-198. Residue Asn-302 is glycosylated (N-linked (GlcNAc...) asparagine). Sulfotyrosine is present on Tyr-385. Residues 414 to 441 (YKFLRIVVWFVSLLALLGNVFVLIVLLT) traverse the membrane as a helical segment. Over 442–450 (SHYKLTVPR) the chain is Cytoplasmic. The helical transmembrane segment at 451-473 (FLMCNLAFADFCMGMYLLLIASV) threads the bilayer. At 474 to 494 (DLYTHSEYYNHAIDWQTGPGC) the chain is on the extracellular side. A disulfide bridge connects residues Cys-494 and Cys-569. Residues 495 to 517 (NTAGFFTVFASELSVYTLTVITL) form a helical membrane-spanning segment. The Cytoplasmic segment spans residues 518–537 (ERWYAITFAMRLDRKIRLRH). The chain crosses the membrane as a helical span at residues 538 to 560 (AYAIMVGGWVCCFLLALLPLVGI). Residues 561-580 (SSYAKVSICLPMDTETPLAL) lie on the Extracellular side of the membrane. Residues 581–602 (AYIILVLLLNIVAFIIVCSCYV) traverse the membrane as a helical segment. Residues 603–625 (KIYITVRNPQYNPGDKDTKIAKR) lie on the Cytoplasmic side of the membrane. Residues 626–649 (MAVLIFTDFMCMAPISFYALSALM) traverse the membrane as a helical segment. The Extracellular portion of the chain corresponds to 650–660 (NKPLITVTNSK). Residues 661–682 (ILLVLFYPLNSCANPFLYAIFT) form a helical membrane-spanning segment. The Cytoplasmic portion of the chain corresponds to 683–764 (KAFQRDVFIL…ISKEYNQTVL (82 aa)). Residues 762-764 (TVL) carry the PDZ-binding motif.

Belongs to the G-protein coupled receptor 1 family. FSH/LSH/TSH subfamily. Interacts with heterodimer GPHA2:GPHB5; this interaction stimulates cAMP production. Interacts (via the PDZ-binding motif) with SCRIB; regulates TSHR trafficking and function. In terms of processing, glycosylated. Sulfated. Sulfation on Tyr-385 plays a role in thyrotropin receptor binding and activation.

Its subcellular location is the cell membrane. It is found in the basolateral cell membrane. Receptor for the thyroid-stimulating hormone (TSH) or thyrotropin. Also acts as a receptor for the heterodimeric glycoprotein hormone (GPHA2:GPHB5) or thyrostimulin. The activity of this receptor is mediated by G proteins which activate adenylate cyclase. Plays a central role in controlling thyroid cell metabolism. This Canis lupus familiaris (Dog) protein is Thyrotropin receptor (TSHR).